A 697-amino-acid polypeptide reads, in one-letter code: Polyribonucleotide nucleotidyltransferase (697 aa).

Residues Asp-489 and Asp-495 each coordinate Mg(2+). The 60-residue stretch at 556-615 (PRIETIKIKPDKIREVIGSGGKVIRGITEATGVKIEIQDDGTINIASADPEATKKAIAMI) folds into the KH domain. The S1 motif domain occupies 625-693 (GKTYKGRIVK…RSGRVKLSRK (69 aa)).

This sequence belongs to the polyribonucleotide nucleotidyltransferase family. It depends on Mg(2+) as a cofactor.

Its subcellular location is the cytoplasm. The enzyme catalyses RNA(n+1) + phosphate = RNA(n) + a ribonucleoside 5'-diphosphate. Involved in mRNA degradation. Catalyzes the phosphorolysis of single-stranded polyribonucleotides processively in the 3'- to 5'-direction. In Bdellovibrio bacteriovorus (strain ATCC 15356 / DSM 50701 / NCIMB 9529 / HD100), this protein is Polyribonucleotide nucleotidyltransferase.